Reading from the N-terminus, the 318-residue chain is Ferrochelatase (318 aa).

Residues His186 and Glu264 each coordinate Fe cation.

Belongs to the ferrochelatase family.

The protein resides in the cytoplasm. It catalyses the reaction heme b + 2 H(+) = protoporphyrin IX + Fe(2+). It functions in the pathway porphyrin-containing compound metabolism; protoheme biosynthesis; protoheme from protoporphyrin-IX: step 1/1. Catalyzes the ferrous insertion into protoporphyrin IX. The sequence is that of Ferrochelatase from Chlamydia felis (strain Fe/C-56) (Chlamydophila felis).